Here is a 119-residue protein sequence, read N- to C-terminus: Large ribosomal subunit protein uL22 (119 aa).

Belongs to the universal ribosomal protein uL22 family. In terms of assembly, part of the 50S ribosomal subunit.

Functionally, this protein binds specifically to 23S rRNA; its binding is stimulated by other ribosomal proteins, e.g. L4, L17, and L20. It is important during the early stages of 50S assembly. It makes multiple contacts with different domains of the 23S rRNA in the assembled 50S subunit and ribosome. Its function is as follows. The globular domain of the protein is located near the polypeptide exit tunnel on the outside of the subunit, while an extended beta-hairpin is found that lines the wall of the exit tunnel in the center of the 70S ribosome. In Bifidobacterium adolescentis (strain ATCC 15703 / DSM 20083 / NCTC 11814 / E194a), this protein is Large ribosomal subunit protein uL22.